The following is an 82-amino-acid chain: MSGKPNERPFSDIITSIRYWVIHSITIPSLFIAGWLFVSTGLAYDIFGAPRPNEYFTEDRQDAPLITDRFNALEQVKQLSQQ.

The chain crosses the membrane as a helical span at residues 21 to 35; it reads VIHSITIPSLFIAGW. Heme is bound at residue H23.

This sequence belongs to the PsbE/PsbF family. In terms of assembly, heterodimer of an alpha subunit and a beta subunit. PSII is composed of 1 copy each of membrane proteins PsbA, PsbB, PsbC, PsbD, PsbE, PsbF, PsbH, PsbI, PsbJ, PsbK, PsbL, PsbM, PsbT, PsbX, PsbY, PsbZ, Psb30/Ycf12, at least 3 peripheral proteins of the oxygen-evolving complex and a large number of cofactors. It forms dimeric complexes. It depends on heme b as a cofactor.

Its subcellular location is the plastid. It is found in the chloroplast thylakoid membrane. Its function is as follows. This b-type cytochrome is tightly associated with the reaction center of photosystem II (PSII). PSII is a light-driven water:plastoquinone oxidoreductase that uses light energy to abstract electrons from H(2)O, generating O(2) and a proton gradient subsequently used for ATP formation. It consists of a core antenna complex that captures photons, and an electron transfer chain that converts photonic excitation into a charge separation. The sequence is that of Cytochrome b559 subunit alpha from Stigeoclonium helveticum (Green alga).